Reading from the N-terminus, the 216-residue chain is Deoxyribose-phosphate aldolase (216 aa).

Catalysis depends on aspartate 89, which acts as the Proton donor/acceptor. Lysine 152 functions as the Schiff-base intermediate with acetaldehyde in the catalytic mechanism. Catalysis depends on lysine 181, which acts as the Proton donor/acceptor.

The protein belongs to the DeoC/FbaB aldolase family. DeoC type 1 subfamily.

The protein resides in the cytoplasm. It catalyses the reaction 2-deoxy-D-ribose 5-phosphate = D-glyceraldehyde 3-phosphate + acetaldehyde. Its pathway is carbohydrate degradation; 2-deoxy-D-ribose 1-phosphate degradation; D-glyceraldehyde 3-phosphate and acetaldehyde from 2-deoxy-alpha-D-ribose 1-phosphate: step 2/2. Catalyzes a reversible aldol reaction between acetaldehyde and D-glyceraldehyde 3-phosphate to generate 2-deoxy-D-ribose 5-phosphate. This chain is Deoxyribose-phosphate aldolase, found in Clostridium tetani (strain Massachusetts / E88).